A 78-amino-acid polypeptide reads, in one-letter code: UPF0335 protein RrIowa_0193 (78 aa).

It belongs to the UPF0335 family.

In Rickettsia rickettsii (strain Iowa), this protein is UPF0335 protein RrIowa_0193.